Here is a 289-residue protein sequence, read N- to C-terminus: Four and a half LIM domains protein 3 (289 aa).

The residue at position 2 (Ser2) is an N-acetylserine. The C4-type zinc finger occupies 7–31 (CAKCNESLYGRKYIQTDSGPYCVPC). LIM zinc-binding domains follow at residues 40–92 (CAEC…CNEC) and 101–153 (CSAC…CVPC). Lys157 is modified (N6-acetyllysine). LIM zinc-binding domains lie at 162 to 212 (CARC…CVAC) and 221 to 275 (CSSC…FVPD). Lys244 is modified (N6-acetyllysine).

As to quaternary structure, interacts with SOX15; the interaction recruits FHL3 to FOXK1 promoters where it acts as a transcriptional coactivator of FOXK1. As to expression, expressed in myogenic progenitor cells (at protein level). Expressed in skeletal striated muscle and the heart. Expressed to a lesser extent, in lung, and kidney. Expressed in skin and skeletal muscles such as the masseter, tongue, tibialis anterior and plantar muscles.

The protein resides in the nucleus. Its subcellular location is the cytoplasm. Its function is as follows. Recruited by SOX15 to FOXK1 promoters where it acts as a transcriptional coactivator of FOXK1. This is Four and a half LIM domains protein 3 (Fhl3) from Mus musculus (Mouse).